Reading from the N-terminus, the 900-residue chain is Alpha-actinin-3 (900 aa).

Methionine 1 carries the N-acetylmethionine modification. Residues 1 to 26 (MMMVMQPEGLGAGEGPFSGGGGGEYM) form a disordered region. The interval 1-260 (MMMVMQPEGL…IMTYVSCFYH (260 aa)) is actin-binding. Gly residues predominate over residues 10–24 (LGAGEGPFSGGGGGE). 2 Calponin-homology (CH) domains span residues 44–148 (KQQR…LRFA) and 157–263 (TSAK…HAFA). Spectrin repeat units follow at residues 287-397 (KLME…WLLS), 407-512 (HLAE…ALER), 522-633 (QLQL…TLQE), and 643-746 (RLRR…EVEN). 2 EF-hand domains span residues 759–794 (EQLN…MGYD) and 795–830 (LGEV…ETAE). Residues aspartate 772, asparagine 776, methionine 778, aspartate 783, aspartate 808, and asparagine 810 each coordinate Ca(2+).

The protein belongs to the alpha-actinin family. As to quaternary structure, homodimer; antiparallel. Also forms heterodimers with ACTN2. Interacts with MYOZ1. As to expression, expression restricted to skeletal muscle fast (type 2) fibers (at protein level).

Functionally, F-actin cross-linking protein which is thought to anchor actin to a variety of intracellular structures. This is a bundling protein. The sequence is that of Alpha-actinin-3 (Actn3) from Mus musculus (Mouse).